A 496-amino-acid polypeptide reads, in one-letter code: ADP-dependent glucokinase (496 aa).

Positions 1 to 22 are cleaved as a signal peptide; it reads MALWRGSACAGFLALAVGCVFL. The ADPK domain occupies 52-496; that stretch reads SPESRLAAAW…GLFYSEARPD (445 aa). Residues glutamate 297, glutamate 328, and aspartate 481 each coordinate Mg(2+). Catalysis depends on aspartate 481, which acts as the Proton acceptor.

This sequence belongs to the ADP-dependent glucokinase family. Monomer. Requires Mg(2+) as cofactor.

It localises to the secreted. The catalysed reaction is D-glucose + ADP = D-glucose 6-phosphate + AMP + H(+). The protein operates within carbohydrate degradation; glycolysis. Catalyzes the phosphorylation of D-glucose to D-glucose 6-phosphate using ADP as the phosphate donor. GDP and CDP can replace ADP, but with reduced efficiency. This Mus musculus (Mouse) protein is ADP-dependent glucokinase (Adpgk).